A 268-amino-acid polypeptide reads, in one-letter code: Small ribosomal subunit protein eS1 (268 aa).

A disordered region spans residues M1–V21.

It belongs to the eukaryotic ribosomal protein eS1 family. As to quaternary structure, component of the small ribosomal subunit. Mature ribosomes consist of a small (40S) and a large (60S) subunit. The 40S subunit contains about 33 different proteins and 1 molecule of RNA (18S). The 60S subunit contains about 49 different proteins and 3 molecules of RNA (28S, 5.8S and 5S).

It localises to the cytoplasm. Its function is as follows. Essential for oogenesis; required for late follicle cell development. The polypeptide is Small ribosomal subunit protein eS1 (Drosophila erecta (Fruit fly)).